The primary structure comprises 271 residues: Putative mitochondrial carrier protein PET8 (271 aa).

3 Solcar repeats span residues 3-76 (STFL…MKQQ), 91-177 (AEVL…LKKK), and 187-270 (VSAW…VHSL). The next 6 membrane-spanning stretches (helical) occupy residues 6-26 (LASL…FFPI), 51-71 (GLGS…VTYD), 97-117 (MLSS…AEVI), 152-168 (GWWT…CIQF), 193-213 (AVCG…LDVL), and 251-271 (MWIS…HSLF).

The protein belongs to the mitochondrial carrier (TC 2.A.29) family.

It is found in the mitochondrion inner membrane. This Eremothecium gossypii (strain ATCC 10895 / CBS 109.51 / FGSC 9923 / NRRL Y-1056) (Yeast) protein is Putative mitochondrial carrier protein PET8 (PET8).